The sequence spans 469 residues: GDNF family receptor alpha-1 (469 aa).

Positions 1-27 are cleaved as a signal peptide; that stretch reads MFLALLYLALPLADVLLSAEVSGLPGG. Repeat copies occupy residues 28-116, 149-237, and 238-341. A disulfide bridge links Cys-39 with Cys-45. Residues Asn-62 and Asn-163 are each glycosylated (N-linked (GlcNAc...) asparagine). 10 disulfide bridges follow: Cys-153-Cys-213, Cys-160-Cys-166, Cys-177-Cys-191, Cys-186-Cys-232, Cys-215-Cys-220, Cys-242-Cys-312, Cys-249-Cys-255, Cys-266-Cys-284, Cys-276-Cys-336, and Cys-314-Cys-324. N-linked (GlcNAc...) asparagine glycosylation is found at Asn-346 and Asn-405. A lipid anchor (GPI-anchor amidated serine) is attached at Ser-430. Residues 431–469 constitute a propeptide, removed in mature form; the sequence is HISSENSFALPTSFYPSTPLILMTIALSLFLFLSSSVVL.

The protein belongs to the GDNFR family. As to quaternary structure, interacts with GDNF ligand and RET: forms a 2:2:2 ternary complex composed of GDNF ligand, GFRA1 and RET receptor.

Its subcellular location is the cell membrane. It is found in the golgi apparatus. It localises to the trans-Golgi network. The protein localises to the endosome. The protein resides in the multivesicular body. Coreceptor for GDNF, a neurotrophic factor that enhances survival and morphological differentiation of dopaminergic neurons and increases their high-affinity dopamine uptake. GDNF-binding leads to autophosphorylation and activation of the RET receptor. In Gallus gallus (Chicken), this protein is GDNF family receptor alpha-1 (GFRA1).